The chain runs to 547 residues: Heme-binding protein A (547 aa).

An N-terminal signal peptide occupies residues 1–18 (MKLKATLTLAAATLVLAA). Cys-19 carries N-palmitoyl cysteine lipidation. Residue Cys-19 is the site of S-diacylglycerol cysteine attachment.

This sequence belongs to the bacterial solute-binding protein 5 family.

The protein localises to the cell inner membrane. Important role in heme acquisition or metabolism. This Haemophilus influenzae (strain ATCC 51907 / DSM 11121 / KW20 / Rd) protein is Heme-binding protein A (hbpA).